We begin with the raw amino-acid sequence, 199 residues long: Cytochrome c oxidase assembly protein CtaG (199 aa).

The Cytoplasmic portion of the chain corresponds to 1 to 12 (MTNTPQTPPKER). Residues 13-35 (ANGVIVGACLAFVAGMVGMAYAA) traverse the membrane as a helical; Signal-anchor for type II membrane protein segment. Residues 36 to 199 (VPLYDMFCRV…VKDGETENRL (164 aa)) are Periplasmic-facing.

Belongs to the COX11/CtaG family.

The protein localises to the cell inner membrane. Its function is as follows. Exerts its effect at some terminal stage of cytochrome c oxidase synthesis, probably by being involved in the insertion of the copper B into subunit I. This chain is Cytochrome c oxidase assembly protein CtaG, found in Sinorhizobium fredii (strain NBRC 101917 / NGR234).